The chain runs to 277 residues: Formamidopyrimidine-DNA glycosylase (277 aa).

P2 serves as the catalytic Schiff-base intermediate with DNA. E3 serves as the catalytic Proton donor. Residue K58 is the Proton donor; for beta-elimination activity of the active site. DNA-binding residues include H95, R113, and R158. The segment at 243 to 277 adopts an FPG-type zinc-finger fold; the sequence is GVYDRANQPCLRCGGVVRQIRQAGRSTYYCTGCQH. Residue R267 is the Proton donor; for delta-elimination activity of the active site.

It belongs to the FPG family. Monomer. The cofactor is Zn(2+).

It catalyses the reaction Hydrolysis of DNA containing ring-opened 7-methylguanine residues, releasing 2,6-diamino-4-hydroxy-5-(N-methyl)formamidopyrimidine.. It carries out the reaction 2'-deoxyribonucleotide-(2'-deoxyribose 5'-phosphate)-2'-deoxyribonucleotide-DNA = a 3'-end 2'-deoxyribonucleotide-(2,3-dehydro-2,3-deoxyribose 5'-phosphate)-DNA + a 5'-end 5'-phospho-2'-deoxyribonucleoside-DNA + H(+). Functionally, involved in base excision repair of DNA damaged by oxidation or by mutagenic agents. Acts as a DNA glycosylase that recognizes and removes damaged bases. Has a preference for oxidized purines, such as 7,8-dihydro-8-oxoguanine (8-oxoG). Has AP (apurinic/apyrimidinic) lyase activity and introduces nicks in the DNA strand. Cleaves the DNA backbone by beta-delta elimination to generate a single-strand break at the site of the removed base with both 3'- and 5'-phosphates. The protein is Formamidopyrimidine-DNA glycosylase of Dechloromonas aromatica (strain RCB).